Reading from the N-terminus, the 423-residue chain is Putative competence-damage inducible protein (423 aa).

The protein belongs to the CinA family.

In Streptococcus pyogenes serotype M6 (strain ATCC BAA-946 / MGAS10394), this protein is Putative competence-damage inducible protein.